A 206-amino-acid chain; its full sequence is Superoxide dismutase [Mn] (206 aa).

Positions 27, 82, 168, and 172 each coordinate Mn(2+).

The protein belongs to the iron/manganese superoxide dismutase family. Homodimer. It depends on Mn(2+) as a cofactor.

It carries out the reaction 2 superoxide + 2 H(+) = H2O2 + O2. Destroys superoxide anion radicals which are normally produced within the cells and which are toxic to biological systems. The protein is Superoxide dismutase [Mn] (sodA) of Escherichia coli O157:H7.